We begin with the raw amino-acid sequence, 166 residues long: Lipoprotein signal peptidase (166 aa).

Helical transmembrane passes span 12–32 (WLWL…LILQ), 70–90 (WFFA…MYRS), and 102–122 (ALII…GFVV). Active-site residues include Asp-123 and Asp-141. A helical transmembrane segment spans residues 137 to 157 (FNLADSAICIGAALIVLEGFL).

The protein belongs to the peptidase A8 family.

Its subcellular location is the cell inner membrane. The catalysed reaction is Release of signal peptides from bacterial membrane prolipoproteins. Hydrolyzes -Xaa-Yaa-Zaa-|-(S,diacylglyceryl)Cys-, in which Xaa is hydrophobic (preferably Leu), and Yaa (Ala or Ser) and Zaa (Gly or Ala) have small, neutral side chains.. It participates in protein modification; lipoprotein biosynthesis (signal peptide cleavage). Its function is as follows. This protein specifically catalyzes the removal of signal peptides from prolipoproteins. The chain is Lipoprotein signal peptidase from Salmonella choleraesuis (strain SC-B67).